We begin with the raw amino-acid sequence, 230 residues long: Protein LURP-one-related 11 (230 aa).

It belongs to the LOR family.

Functionally, might be related to the phospholipid scramblase and tubby-like superfamily of membrane tethered transcription factors. The sequence is that of Protein LURP-one-related 11 from Arabidopsis thaliana (Mouse-ear cress).